A 239-amino-acid polypeptide reads, in one-letter code: Serine protease SplC (239 aa).

Positions 1-36 (MNKNIVIKSMAALAILTSVTGINAAVVEETQQIANA) are cleaved as a signal peptide. Catalysis depends on charge relay system residues H75, D113, and S193.

It belongs to the peptidase S1B family.

Its subcellular location is the secreted. In Staphylococcus aureus (strain MW2), this protein is Serine protease SplC (splC).